We begin with the raw amino-acid sequence, 370 residues long: Quinolinate synthase (370 aa).

Iminosuccinate is bound by residues His62 and Ser83. Cys128 is a [4Fe-4S] cluster binding site. Iminosuccinate contacts are provided by residues 154–156 (YAN) and Ser171. Cys215 is a [4Fe-4S] cluster binding site. Residues 241–243 (HPE) and Thr258 contribute to the iminosuccinate site. Cys312 lines the [4Fe-4S] cluster pocket.

This sequence belongs to the quinolinate synthase family. Type 1 subfamily. It depends on [4Fe-4S] cluster as a cofactor.

It is found in the cytoplasm. The catalysed reaction is iminosuccinate + dihydroxyacetone phosphate = quinolinate + phosphate + 2 H2O + H(+). Its pathway is cofactor biosynthesis; NAD(+) biosynthesis; quinolinate from iminoaspartate: step 1/1. Functionally, catalyzes the condensation of iminoaspartate with dihydroxyacetone phosphate to form quinolinate. This Neisseria meningitidis serogroup C (strain 053442) protein is Quinolinate synthase.